Here is a 150-residue protein sequence, read N- to C-terminus: 3-hydroxyacyl-[acyl-carrier-protein] dehydratase FabZ (150 aa).

His-51 is an active-site residue.

The protein belongs to the thioester dehydratase family. FabZ subfamily.

Its subcellular location is the cytoplasm. It carries out the reaction a (3R)-hydroxyacyl-[ACP] = a (2E)-enoyl-[ACP] + H2O. Its function is as follows. Involved in unsaturated fatty acids biosynthesis. Catalyzes the dehydration of short chain beta-hydroxyacyl-ACPs and long chain saturated and unsaturated beta-hydroxyacyl-ACPs. This Legionella pneumophila (strain Lens) protein is 3-hydroxyacyl-[acyl-carrier-protein] dehydratase FabZ.